The following is a 368-amino-acid chain: 2-aminoethylphosphonate--pyruvate transaminase (368 aa).

Position 192 is an N6-(pyridoxal phosphate)lysine (lysine 192).

The protein belongs to the class-V pyridoxal-phosphate-dependent aminotransferase family. PhnW subfamily. In terms of assembly, homodimer. The cofactor is pyridoxal 5'-phosphate.

The enzyme catalyses (2-aminoethyl)phosphonate + pyruvate = phosphonoacetaldehyde + L-alanine. Involved in phosphonate degradation. The sequence is that of 2-aminoethylphosphonate--pyruvate transaminase from Pseudomonas putida (strain ATCC 700007 / DSM 6899 / JCM 31910 / BCRC 17059 / LMG 24140 / F1).